The sequence spans 552 residues: 3-hydroxy-3-methylglutaryl-coenzyme A reductase 1 (552 aa).

2 stretches are compositionally biased toward low complexity: residues 79 to 99 (QHNQ…QQPQ) and 112 to 122 (QQQQQQQQQQQ). Positions 79 to 138 (QHNQQQQQKQQPSQDYIQQPQNDNNINSGKEQEQQQQQQQQQQQTPDITNQPTKTNKKIP) are disordered. The segment covering 123–132 (TPDITNQPTK) has biased composition (polar residues). Catalysis depends on glutamate 237, which acts as the Charge relay system. N-linked (GlcNAc...) asparagine glycosylation occurs at asparagine 288. Lysine 369 acts as the Charge relay system in catalysis. N-linked (GlcNAc...) asparagine glycosylation occurs at asparagine 375. Catalysis depends on aspartate 445, which acts as the Charge relay system. Histidine 543 serves as the catalytic Proton donor.

Belongs to the HMG-CoA reductase family.

The protein resides in the endoplasmic reticulum membrane. The catalysed reaction is (R)-mevalonate + 2 NADP(+) + CoA = (3S)-3-hydroxy-3-methylglutaryl-CoA + 2 NADPH + 2 H(+). Its pathway is metabolic intermediate biosynthesis; (R)-mevalonate biosynthesis; (R)-mevalonate from acetyl-CoA: step 3/3. Functionally, this transmembrane glycoprotein is involved in the control of cholesterol biosynthesis. It is the rate-limiting enzyme of the sterol biosynthesis. The sequence is that of 3-hydroxy-3-methylglutaryl-coenzyme A reductase 1 (hmgA) from Dictyostelium discoideum (Social amoeba).